Here is a 472-residue protein sequence, read N- to C-terminus: Adenosylhomocysteinase (472 aa).

The substrate site is built by Thr62, Asp137, and Glu197. 198–200 is a binding site for NAD(+); it reads TTT. Residues Lys227 and Asp231 each coordinate substrate. NAD(+) contacts are provided by residues Asn232, 261–266, Glu284, Asn319, 340–342, and Asn385; these read GYGDVG and IGH.

It belongs to the adenosylhomocysteinase family. NAD(+) serves as cofactor.

The protein resides in the cytoplasm. The catalysed reaction is S-adenosyl-L-homocysteine + H2O = L-homocysteine + adenosine. It participates in amino-acid biosynthesis; L-homocysteine biosynthesis; L-homocysteine from S-adenosyl-L-homocysteine: step 1/1. Functionally, may play a key role in the regulation of the intracellular concentration of adenosylhomocysteine. The sequence is that of Adenosylhomocysteinase from Bordetella pertussis (strain Tohama I / ATCC BAA-589 / NCTC 13251).